A 649-amino-acid polypeptide reads, in one-letter code: Leucine-rich repeat transmembrane protein FLRT3 (649 aa).

An N-terminal signal peptide occupies residues 1 to 28 (MISAAWSIFLIGTKIGLFLQVAPLSVMA). Positions 29 to 58 (KSCPSVCRCDAGFIYCNDRFLTSIPTGIPE) constitute an LRRNT domain. The Extracellular portion of the chain corresponds to 29 to 528 (KSCPSVCRCD…KEPYKNPNLP (500 aa)). 2 disulfide bridges follow: Cys31-Cys37 and Cys35-Cys44. The segment at 38–67 (DAGFIYCNDRFLTSIPTGIPEDATTLYLQN) is interaction with ADGRL3. LRR repeat units follow at residues 59 to 80 (DATT…SDLK), 84 to 104 (KVER…NLPK), 105 to 126 (YVKE…SLSK), 129 to 150 (YLEE…EGAF), 155 to 175 (YLRL…GLPR), 176 to 197 (TIEE…SLQG), 200 to 220 (SLKR…GDKV), 226 to 247 (NLTE…LPGT), 248 to 269 (NLRK…AFSY), and 272 to 293 (QLYR…IFDD). N-linked (GlcNAc...) asparagine glycosylation is present at Asn226. N-linked (GlcNAc...) asparagine glycans are attached at residues Asn282 and Asn296. The 53-residue stretch at 305–357 (NPWYCGCKMKWVRDWLQSLPVKVNVRGLMCQAPEKVRGMAIKDLNAELFDCKD) folds into the LRRCT domain. A disulfide bridge connects residues Cys309 and Cys334. Positions 387–407 (KQPDIKNPKLTKDHQTTGSPS) are disordered. Positions 389-401 (PDIKNPKLTKDHQ) are enriched in basic and acidic residues. A Fibronectin type-III domain is found at 409 to 504 (KTITITVKSV…VCIETETAPL (96 aa)). A helical membrane pass occupies residues 529–549 (LAAIIGGAVALVTIALLALVC). At 550-649 (WYVHRNGSLF…GIPDSDHSHS (100 aa)) the chain is on the cytoplasmic side. Positions 622-649 (LYKNNHSESSSNRSYRDSGIPDSDHSHS) are disordered.

Monomer and homodimer. Self-associates (via leucine-rich repeats), giving rise to homooligomers. Interacts with FGFR1. Interacts (via extracellular domain) with ADGRL1/LPHN1 and LPHN2 (via olfactomedin-like domain). Interacts (via extracellular domain) with ADGRL3 (via olfactomedin-like domain); the interaction is direct. Interacts (via extracellular domain) with UNC5B and UNC5D (via extracellular domain); the interaction is direct. Identified in complexes composed of FLRT3, ADGRL3 and UNC5B, respectively FLRT3, ADGRL3 and UNC5D. May also interact (via extracellular domain) with UNC5A and UNC5C. Interacts (via cytoplasmic domain) with ROBO1. In terms of processing, N-glycosylated. Post-translationally, proteolytic cleavage in the juxtamembrane region gives rise to a soluble ectodomain. Cleavage is probably effected by a metalloprotease. Expressed in kidney, brain, pancreas, skeletal muscle, lung, liver, placenta, and heart.

The protein resides in the cell membrane. It localises to the presynaptic cell membrane. The protein localises to the endoplasmic reticulum membrane. Its subcellular location is the cell junction. It is found in the focal adhesion. The protein resides in the secreted. It localises to the cell projection. The protein localises to the axon. Its subcellular location is the growth cone membrane. Its function is as follows. Functions in cell-cell adhesion, cell migration and axon guidance, exerting an attractive or repulsive role depending on its interaction partners. Plays a role in the spatial organization of brain neurons. Plays a role in vascular development in the retina. Plays a role in cell-cell adhesion via its interaction with ADGRL3 and probably also other latrophilins that are expressed at the surface of adjacent cells. Interaction with the intracellular domain of ROBO1 mediates axon attraction towards cells expressing NTN1. Mediates axon growth cone collapse and plays a repulsive role in neuron guidance via its interaction with UNC5B, and possibly also other UNC-5 family members. Promotes neurite outgrowth (in vitro). Mediates cell-cell contacts that promote an increase both in neurite number and in neurite length. Plays a role in the regulation of the density of glutamaergic synapses. Plays a role in fibroblast growth factor-mediated signaling cascades. Required for normal morphogenesis during embryonic development, but not for normal embryonic patterning. Required for normal ventral closure, headfold fusion and definitive endoderm migration during embryonic development. Required for the formation of a normal basement membrane and the maintenance of a normal anterior visceral endoderm during embryonic development. The sequence is that of Leucine-rich repeat transmembrane protein FLRT3 (FLRT3) from Homo sapiens (Human).